Here is an 860-residue protein sequence, read N- to C-terminus: Leucine--tRNA ligase (860 aa).

The 'HIGH' region motif lies at 42–52 (PYPSGRLHMGH). Positions 619–623 (KMSKS) match the 'KMSKS' region motif. Lys-622 serves as a coordination point for ATP.

Belongs to the class-I aminoacyl-tRNA synthetase family.

The protein localises to the cytoplasm. The enzyme catalyses tRNA(Leu) + L-leucine + ATP = L-leucyl-tRNA(Leu) + AMP + diphosphate. The chain is Leucine--tRNA ligase from Escherichia coli O127:H6 (strain E2348/69 / EPEC).